Consider the following 467-residue polypeptide: Phosphoglucosamine mutase (467 aa).

S120 acts as the Phosphoserine intermediate in catalysis. Residues S120, D261, D263, and D265 each coordinate Mg(2+). At S120 the chain carries Phosphoserine.

It belongs to the phosphohexose mutase family. Mg(2+) serves as cofactor. Post-translationally, activated by phosphorylation.

It carries out the reaction alpha-D-glucosamine 1-phosphate = D-glucosamine 6-phosphate. Its function is as follows. Catalyzes the conversion of glucosamine-6-phosphate to glucosamine-1-phosphate. The protein is Phosphoglucosamine mutase of Parafrankia sp. (strain EAN1pec).